Reading from the N-terminus, the 248-residue chain is 26.2 kDa heat shock protein, mitochondrial (248 aa).

The N-terminal 32 residues, 1–32 (MASTVALKGRPLATLLRQLLAADAPPAATGRP), are a transit peptide targeting the mitochondrion. Positions 26-48 (PAATGRPVAAAPAASGKPVTAPA) are disordered. The 110-residue stretch at 139–248 (ATAAARRGGW…RKDVFQVNVE (110 aa)) folds into the sHSP domain.

It belongs to the small heat shock protein (HSP20) family. May form oligomeric structures.

The protein localises to the mitochondrion. In Oryza sativa subsp. japonica (Rice), this protein is 26.2 kDa heat shock protein, mitochondrial (HSP26.2).